We begin with the raw amino-acid sequence, 606 residues long: Pyruvate decarboxylase 2 (606 aa).

2 residues coordinate substrate: Asp-68 and His-155. A thiamine pyrophosphate binding region spans residues 433-515 (DSWFNCQKLK…FLINNGGYTI (83 aa)). Residues Asp-483, Asn-510, and Gly-512 each coordinate Mg(2+). Residue Glu-516 participates in substrate binding.

The protein belongs to the TPP enzyme family. In terms of assembly, homotetramer. Requires a metal cation as cofactor. The cofactor is thiamine diphosphate.

It carries out the reaction a 2-oxocarboxylate + H(+) = an aldehyde + CO2. This Oryza sativa subsp. indica (Rice) protein is Pyruvate decarboxylase 2 (PDC2).